Consider the following 118-residue polypeptide: Holo-[acyl-carrier-protein] synthase (118 aa).

Mg(2+) is bound by residues Asp-5 and Glu-51.

This sequence belongs to the P-Pant transferase superfamily. AcpS family. Requires Mg(2+) as cofactor.

The protein resides in the cytoplasm. It carries out the reaction apo-[ACP] + CoA = holo-[ACP] + adenosine 3',5'-bisphosphate + H(+). Functionally, transfers the 4'-phosphopantetheine moiety from coenzyme A to a Ser of acyl-carrier-protein. The sequence is that of Holo-[acyl-carrier-protein] synthase from Helicobacter pylori (strain P12).